We begin with the raw amino-acid sequence, 189 residues long: Peptidyl-tRNA hydrolase (189 aa).

Tyrosine 14 contacts tRNA. Histidine 19 acts as the Proton acceptor in catalysis. Residues tyrosine 64, asparagine 66, and asparagine 112 each coordinate tRNA.

Belongs to the PTH family. In terms of assembly, monomer.

It localises to the cytoplasm. The catalysed reaction is an N-acyl-L-alpha-aminoacyl-tRNA + H2O = an N-acyl-L-amino acid + a tRNA + H(+). Its function is as follows. Hydrolyzes ribosome-free peptidyl-tRNAs (with 1 or more amino acids incorporated), which drop off the ribosome during protein synthesis, or as a result of ribosome stalling. In terms of biological role, catalyzes the release of premature peptidyl moieties from peptidyl-tRNA molecules trapped in stalled 50S ribosomal subunits, and thus maintains levels of free tRNAs and 50S ribosomes. This Dehalococcoides mccartyi (strain CBDB1) protein is Peptidyl-tRNA hydrolase.